Here is a 131-residue protein sequence, read N- to C-terminus: Riboflavin kinase (131 aa).

Position 11 to 16 (11 to 16 (GLQKAG)) interacts with CDP. Mg(2+) contacts are provided by Thr-40 and Asn-42. Positions 98 and 106 each coordinate FMN. 111 to 114 (EKLR) contributes to the CDP binding site.

Belongs to the archaeal riboflavin kinase family. It depends on Mg(2+) as a cofactor.

It catalyses the reaction riboflavin + CTP = CDP + FMN + H(+). Its pathway is cofactor biosynthesis; FMN biosynthesis; FMN from riboflavin (CTP route): step 1/1. In terms of biological role, catalyzes the CTP-dependent phosphorylation of riboflavin (vitamin B2) to form flavin mononucleotide (FMN). In Methanosphaera stadtmanae (strain ATCC 43021 / DSM 3091 / JCM 11832 / MCB-3), this protein is Riboflavin kinase.